A 1001-amino-acid polypeptide reads, in one-letter code: Protein MEI2-like 4 (1001 aa).

The disordered stretch occupies residues His-100–Ser-120. RRM domains lie at Arg-275–Pro-348 and Gly-360–Leu-433. Disordered regions lie at residues Gly-767–Tyr-815 and Phe-941–Asp-1001. Residues Pro-793 to Asp-803 show a composition bias toward basic and acidic residues. Residues Asp-978–Asp-994 are compositionally biased toward polar residues.

Probable RNA-binding protein that may play a role in growth regulation. The polypeptide is Protein MEI2-like 4 (ML4) (Oryza sativa subsp. japonica (Rice)).